Here is a 450-residue protein sequence, read N- to C-terminus: Signal recognition particle 54 kDa protein (450 aa).

Residues 107 to 114 (GIQGSGKT), 188 to 192 (DTAGR), and 247 to 250 (TKLD) contribute to the GTP site.

Belongs to the GTP-binding SRP family. SRP54 subfamily. As to quaternary structure, part of the signal recognition particle protein translocation system, which is composed of SRP and FtsY. Archaeal SRP consists of a 7S RNA molecule of 300 nucleotides and two protein subunits: SRP54 and SRP19.

It localises to the cytoplasm. It catalyses the reaction GTP + H2O = GDP + phosphate + H(+). Its function is as follows. Involved in targeting and insertion of nascent membrane proteins into the cytoplasmic membrane. Binds to the hydrophobic signal sequence of the ribosome-nascent chain (RNC) as it emerges from the ribosomes. The SRP-RNC complex is then targeted to the cytoplasmic membrane where it interacts with the SRP receptor FtsY. This Methanococcus vannielii (strain ATCC 35089 / DSM 1224 / JCM 13029 / OCM 148 / SB) protein is Signal recognition particle 54 kDa protein.